We begin with the raw amino-acid sequence, 567 residues long: Monodechloroaminopyrrolnitrin halogenase PrnC (567 aa).

It functions in the pathway antibiotic biosynthesis. Involved in the biosynthesis of the antifungal antibiotic pyrrolnitrin. Catalyzes the chlorination of monodechloroaminopyrrolnitrin (MDA) at the 3 position to form aminopyrrolnitrin (APRN). The protein is Monodechloroaminopyrrolnitrin halogenase PrnC (prnC) of Pseudomonas fluorescens.